The primary structure comprises 385 residues: FAD-dependent monooxygenase verC2 (385 aa).

The FAD site is built by Arg27, Asp227, and Ala240. Residue Asn320 is glycosylated (N-linked (GlcNAc...) asparagine). A helical membrane pass occupies residues 365–385 (WKTTIMFIALLTIVVLIYSFI).

Belongs to the paxM FAD-dependent monooxygenase family. The cofactor is FAD.

It localises to the membrane. It participates in secondary metabolite biosynthesis; terpenoid biosynthesis. It functions in the pathway mycotoxin biosynthesis. FAD-dependent monooxygenase; part of the gene cluster that mediates the biosynthesis of the neurotoxin verrucosidin, a methylated alpha-pyrone polyketide that inhibits oxidative phosphorylation in mitochondria and thereby causes neurological diseases. The carbon backbone of verrucosidin is synthesized by the HR-PKS verA, and further modified by the other verrucodidin cluster enzymes. This chain is FAD-dependent monooxygenase verC2, found in Penicillium polonicum.